The following is a 214-amino-acid chain: Probable transaldolase (214 aa).

Catalysis depends on Lys83, which acts as the Schiff-base intermediate with substrate.

It belongs to the transaldolase family. Type 3B subfamily.

It localises to the cytoplasm. The catalysed reaction is D-sedoheptulose 7-phosphate + D-glyceraldehyde 3-phosphate = D-erythrose 4-phosphate + beta-D-fructose 6-phosphate. It functions in the pathway carbohydrate degradation; pentose phosphate pathway; D-glyceraldehyde 3-phosphate and beta-D-fructose 6-phosphate from D-ribose 5-phosphate and D-xylulose 5-phosphate (non-oxidative stage): step 2/3. Transaldolase is important for the balance of metabolites in the pentose-phosphate pathway. The protein is Probable transaldolase of Carboxydothermus hydrogenoformans (strain ATCC BAA-161 / DSM 6008 / Z-2901).